Consider the following 675-residue polypeptide: Polyphosphate kinase (675 aa).

N42 contributes to the ATP binding site. Residues R372 and R401 each contribute to the Mg(2+) site. Catalysis depends on H431, which acts as the Phosphohistidine intermediate. Residues Y464, R558, and H586 each coordinate ATP.

The protein belongs to the polyphosphate kinase 1 (PPK1) family. The cofactor is Mg(2+). Post-translationally, an intermediate of this reaction is the autophosphorylated ppk in which a phosphate is covalently linked to a histidine residue through a N-P bond.

It catalyses the reaction [phosphate](n) + ATP = [phosphate](n+1) + ADP. Its function is as follows. Catalyzes the reversible transfer of the terminal phosphate of ATP to form a long-chain polyphosphate (polyP). The protein is Polyphosphate kinase of Helicobacter pylori (strain ATCC 700392 / 26695) (Campylobacter pylori).